Consider the following 1243-residue polypeptide: Membrane-associated phosphatidylinositol transfer protein 1 (1243 aa).

3 positions are modified to phosphothreonine: T59, T282, and T287. The disordered stretch occupies residues C259 to L330. Residues P271–S283 are compositionally biased toward polar residues. Low complexity predominate over residues A299–S319. Residues S300, S304, S319, S326, S329, S342, S345, S346, and S373 each carry the phosphoserine modification. Phosphoserine; by CDK1 is present on S382. Positions A581–S593 are enriched in low complexity. A disordered region spans residues A581–P679. A phosphoserine mark is found at S593, S600, and S621. Residues G643–G658 show a composition bias toward polar residues. In terms of domain architecture, DDHD spans R684 to I878. Position 895 is a phosphoserine (S895). The disordered stretch occupies residues L1206–E1243. Omega-N-methylarginine occurs at positions 1210 and 1217. S1236 is subject to Phosphoserine.

It belongs to the PtdIns transfer protein family. PI transfer class IIA subfamily. Interacts with PTK2B via its C-terminus. Interacts with RHOA. Has higher affinity for the inactive, GDP-bound form of RHOA. The CDK1-phosphorylated form interacts with PLK1. Interacts with VAPB and PIK4CA. Phosphorylated on multiple sites by CDK1 at the onset of mitosis. Phosphorylation facilitates dissociation from the Golgi complex and is required for interaction with PLK1. Post-translationally, phosphorylated on threonine residues upon treatment with oleic acid. In terms of processing, phosphorylated on tyrosine residues by PTK2B. As to expression, detected at high levels in brain, and at lower levels in lung, kidney, spleen and liver (at protein level). Ubiquitous. Highly expressed in embryonic retina and the central nervous system.

It is found in the cytoplasm. Its subcellular location is the golgi apparatus. The protein resides in the golgi stack membrane. The protein localises to the endoplasmic reticulum membrane. It localises to the lipid droplet. It is found in the cleavage furrow. Its subcellular location is the midbody. The enzyme catalyses a 1,2-diacyl-sn-glycero-3-phospho-(1D-myo-inositol)(in) = a 1,2-diacyl-sn-glycero-3-phospho-(1D-myo-inositol)(out). In terms of biological role, catalyzes the transfer of phosphatidylinositol (PI) between membranes. Binds PI. Also binds phosphatidylcholine (PC) and phosphatidic acid (PA) with the binding affinity order of PI &gt; PA &gt; PC. Regulates RHOA activity, and plays a role in cytoskeleton remodeling. Necessary for normal completion of cytokinesis. Plays a role in maintaining normal diacylglycerol levels in the Golgi apparatus. Necessary for maintaining the normal structure of the endoplasmic reticulum and the Golgi apparatus. Required for protein export from the endoplasmic reticulum and the Golgi. Binds calcium ions. The chain is Membrane-associated phosphatidylinositol transfer protein 1 (Pitpnm1) from Mus musculus (Mouse).